We begin with the raw amino-acid sequence, 205 residues long: Large ribosomal subunit protein uL13 (205 aa).

The protein belongs to the universal ribosomal protein uL13 family.

The polypeptide is Large ribosomal subunit protein uL13 (RPL13A) (Lupinus luteus (European yellow lupine)).